The chain runs to 439 residues: MASNSWTANSSPGEAREDGSEGLDKGLDNDAEGVWSPDIEQSFQEALAIYPPCGRRKIILSDEGKMYGRNELIARYIKLRTGKTRTRKQVSSHIQVLARKKVREYQVGIKAMNLDQVSKDKALQSMASMSSAQIVSASVLQNKFSPPSPLPQAVFSSSSRFWSSPPLLGQQPGPSQDIKPFAQPAYPIQPPLPPALNSYESLAPLPPAAASATASAPAWQDRTIASSRLRLLEYSAFMEVQRDPDTYSKHLFVHIGQTNPAFSDPPLEAVDVRQIYDKFPEKKGGLKELYEKGPPNAFFLVKFWADLNSTIQEGPGAFYGVSSQYSSADSMTISVSTKVCSFGKQVVEKVETEYARLENGRFVYRIHRSPMCEYMINFIHKLKHLPEKYMMNSVLENFTILQVVTSRDSQETLLVIAFVFEVSTSEHGAQHHVYKLVKD.

Positions 1-12 (MASNSWTANSSP) are enriched in polar residues. The disordered stretch occupies residues 1 to 34 (MASNSWTANSSPGEAREDGSEGLDKGLDNDAEGV). An N-acetylalanine modification is found at alanine 2. Basic and acidic residues predominate over residues 14 to 28 (EAREDGSEGLDKGLD). Positions 28-104 (DNDAEGVWSP…QVLARKKVRE (77 aa)) form a DNA-binding region, TEA. The residue at position 148 (serine 148) is a Phosphoserine. The tract at residues 173 to 439 (GPSQDIKPFA…QHHVYKLVKD (267 aa)) is transcriptional activation.

In terms of assembly, interacts with YAP1 and WWTR1/TAZ. In terms of tissue distribution, expressed in embryos as well as in many adult tissues.

The protein localises to the nucleus. Transcription factor which plays a key role in the Hippo signaling pathway, a pathway involved in organ size control and tumor suppression by restricting proliferation and promoting apoptosis. The core of this pathway is composed of a kinase cascade wherein MST1/MST2, in complex with its regulatory protein SAV1, phosphorylates and activates LATS1/2 in complex with its regulatory protein MOB1, which in turn phosphorylates and inactivates YAP1 oncoprotein and WWTR1/TAZ. Acts by mediating gene expression of YAP1 and WWTR1/TAZ, thereby regulating cell proliferation, migration and epithelial mesenchymal transition (EMT) induction. This chain is Transcriptional enhancer factor TEF-5 (Tead3), found in Mus musculus (Mouse).